A 283-amino-acid polypeptide reads, in one-letter code: Phospholipid phosphatase 1 (283 aa).

The Cytoplasmic segment spans residues 1–6 (MFDKTR). The PDZ-binding; involved in localization to the apical cell membrane motif lies at 5–7 (TRL). The helical transmembrane segment at 7–27 (LPYVALDVICVLLAGLPFAIL) threads the bilayer. At 28–53 (TSRHTPFQRGIFCNDDSIKYPYKEDT) the chain is on the extracellular side. A helical membrane pass occupies residues 54–74 (IPYALLGGIVIPFCIIVMSIG). Topologically, residues 75 to 88 (ESLSVYFNVLHSNS) are cytoplasmic. The helical transmembrane segment at 89–109 (FVGNPYIATIYKAVGAFLFGV) threads the bilayer. Over 110 to 164 (SASQSLTDIAKYTIGSLRPHFLAICNPDWSKINCSDGYIEDYICQGNEEKVKEGR) the chain is Extracellular. The phosphatase sequence motif I stretch occupies residues 120–128 (KYTIGSLRP). N-linked (GlcNAc...) asparagine glycosylation is present at Asn-142. A helical transmembrane segment spans residues 165-185 (LSFYSGHSSFSMYCMLFVALY). The segment at 168–171 (YSGH) is phosphatase sequence motif II. The Proton donors role is filled by His-171. At 186–199 (LQARMKGDWARLLR) the chain is on the cytoplasmic side. A helical transmembrane segment spans residues 200 to 220 (PMLQFGLIAFSIYVGLSRVSD). The interval 216–227 (SRVSDYKHHWSD) is phosphatase sequence motif III. Residues 221–229 (YKHHWSDVT) are Extracellular-facing. His-223 functions as the Nucleophile in the catalytic mechanism. A helical membrane pass occupies residues 230–250 (VGLIQGAAMAILVALYVSDFF). The Cytoplasmic segment spans residues 251-283 (KDTHSYKERKEEDPHTTLHETASSRNYSTNHEP). The interval 260–283 (KEEDPHTTLHETASSRNYSTNHEP) is disordered. Positions 269 to 283 (HETASSRNYSTNHEP) are enriched in polar residues.

It belongs to the PA-phosphatase related phosphoesterase family. In terms of assembly, forms functional homodimers and homooligomers that are not required for substrate recognition and catalytic activity. Can also form heterooligomers with PLPP2 and PLPP3. Post-translationally, N-glycosylated. N-linked sugars are of the complex type. N-glycosylation is not required for the phosphatase activity. In terms of tissue distribution, widely expressed. Highly expressed in kidney and lung. Almost undetectable in brain, heart, bone, muscle or spleen.

The protein resides in the cell membrane. It localises to the apical cell membrane. The protein localises to the membrane raft. Its subcellular location is the membrane. It is found in the caveola. It catalyses the reaction a 1,2-diacyl-sn-glycero-3-phosphate + H2O = a 1,2-diacyl-sn-glycerol + phosphate. The catalysed reaction is 1,2-dihexadecanoyl-sn-glycero-3-phosphate + H2O = 1,2-dihexadecanoyl-sn-glycerol + phosphate. The enzyme catalyses 1,2-di-(9Z-octadecenoyl)-sn-glycero-3-phosphate + H2O = 1,2-di-(9Z-octadecenoyl)-sn-glycerol + phosphate. It carries out the reaction a monoacyl-sn-glycero-3-phosphate + H2O = a monoacylglycerol + phosphate. It catalyses the reaction (9Z)-octadecenoyl-sn-glycero-3-phosphate + H2O = (9Z-octadecenoyl)-glycerol + phosphate. The catalysed reaction is a 1-acyl-sn-glycero-3-phosphate + H2O = a 1-acyl-sn-glycerol + phosphate. The enzyme catalyses 1-(9Z-octadecenoyl)-sn-glycero-3-phosphate + H2O = 1-(9Z-octadecenoyl)-sn-glycerol + phosphate. It carries out the reaction a 1,2-diacyl-sn-glycerol 3-diphosphate + H2O = a 1,2-diacyl-sn-glycero-3-phosphate + phosphate + H(+). It catalyses the reaction sphing-4-enine 1-phosphate + H2O = sphing-4-enine + phosphate. The catalysed reaction is an N-acylsphing-4-enine 1-phosphate + H2O = an N-acylsphing-4-enine + phosphate. The enzyme catalyses N-(octanoyl)-sphing-4-enine-1-phosphate + H2O = N-octanoylsphing-4-enine + phosphate. It carries out the reaction N-(9Z-octadecenoyl)-ethanolamine phosphate + H2O = N-(9Z-octadecenoyl) ethanolamine + phosphate. It catalyses the reaction 1-hexadecanoyl-2-(9Z-octadecenoyl)-sn-glycero-3-phosphate + H2O = 1-hexadecanoyl-2-(9Z-octadecenoyl)-sn-glycerol + phosphate. It participates in lipid metabolism; phospholipid metabolism. Magnesium-independent phospholipid phosphatase. Insensitive to N-ethylmaleimide. Functionally, magnesium-independent phospholipid phosphatase of the plasma membrane that catalyzes the dephosphorylation of a variety of glycerolipid and sphingolipid phosphate esters including phosphatidate/PA, lysophosphatidate/LPA, diacylglycerol pyrophosphate/DGPP, sphingosine 1-phosphate/S1P and ceramide 1-phosphate/C1P. Also acts on N-oleoyl ethanolamine phosphate/N-(9Z-octadecenoyl)-ethanolamine phosphate, a potential physiological compound. Through its extracellular phosphatase activity allows both the hydrolysis and the cellular uptake of these bioactive lipid mediators from the milieu, regulating signal transduction in different cellular processes. It is for instance essential for the extracellular hydrolysis of S1P and subsequent conversion into intracellular S1P. Involved in the regulation of inflammation, platelets activation, cell proliferation and migration among other processes. May also have an intracellular activity to regulate phospholipid-mediated signaling pathways. This chain is Phospholipid phosphatase 1, found in Mus musculus (Mouse).